Reading from the N-terminus, the 193-residue chain is Ion-translocating oxidoreductase complex subunit B (193 aa).

The hydrophobic stretch occupies residues 1–26 (MSTMLIAVILLTLLALFFGVLLGFAA). The 4Fe-4S domain maps to 32–90 (EGNPIVDELEAILPQTQCGQCGYPGCRPYAEAIANGDKVNKCPPGGTATMEKLASLMGV). 12 residues coordinate [4Fe-4S] cluster: C49, C52, C57, C73, C114, C117, C120, C124, C144, C147, C150, and C154. 4Fe-4S ferredoxin-type domains lie at 105–134 (KVAY…GAGK) and 136–164 (MHTV…MLPV).

This sequence belongs to the 4Fe4S bacterial-type ferredoxin family. RnfB subfamily. The complex is composed of six subunits: RnfA, RnfB, RnfC, RnfD, RnfE and RnfG. [4Fe-4S] cluster is required as a cofactor.

The protein resides in the cell inner membrane. Its function is as follows. Part of a membrane-bound complex that couples electron transfer with translocation of ions across the membrane. The sequence is that of Ion-translocating oxidoreductase complex subunit B from Shewanella sp. (strain MR-4).